The sequence spans 181 residues: MLPMSVHPATTPALASRPRVSLPRPSTPSSSSSLVHLKSRRPPLRSLRSLTAAAAAAAVEAGEPYFGLGDDEPLGGEGDAEAVVESEEYKVEVPEKQDPMLVLKFIWMEKNIGIALDQMVPGVGSIPLSPYYFWPRKDAWEELRAKLEEKEWISQKQMIILLNQATDIINLWQQGGGSLST.

Residues 1–40 (MLPMSVHPATTPALASRPRVSLPRPSTPSSSSSLVHLKSR) form a disordered region. Low complexity predominate over residues 14–36 (LASRPRVSLPRPSTPSSSSSLVH).

It belongs to the chloroplast-specific ribosomal protein cS23 family. In terms of assembly, part of the 30S ribosomal subunit.

Its subcellular location is the plastid. It localises to the chloroplast. Its function is as follows. Component of the chloroplast ribosome (chloro-ribosome), a dedicated translation machinery responsible for the synthesis of chloroplast genome-encoded proteins, including proteins of the transcription and translation machinery and components of the photosynthetic apparatus. This is Small ribosomal subunit protein cS23 (PSRP3) from Hordeum vulgare (Barley).